The following is a 323-amino-acid chain: MPLRSVILGCGAYLPARVLTNEDLTRIVETSDEWIVERTGIKSRHIAADGENTSDLAEAAARAALAHAGVAAEEVDLIVLATATPDQTFPATATKVQARLGITRGAAFDVQAVCSGFVYALAIADNFIKAGQARTALVIGAETFSRILDWTDRTTCVLFGDGAGAVVLRAEEGEGTADRGILSTHLHSDGRHHDLLYVDGGPSTTQTVGHLRMKGQEVFKHAVVNLAHVVEEALAANGLSPADISWLVPHQANRRIIESTARKLKLDGSRVVLTVDHHGNTSAASIPLALCEAVHDGRVQRGDIVLLEAMGGGFTWGAALVRW.

Active-site residues include cysteine 114 and histidine 250. An ACP-binding region spans residues 251 to 255 (QANRR). The active site involves asparagine 280.

Belongs to the thiolase-like superfamily. FabH family. In terms of assembly, homodimer.

It localises to the cytoplasm. The catalysed reaction is malonyl-[ACP] + acetyl-CoA + H(+) = 3-oxobutanoyl-[ACP] + CO2 + CoA. It functions in the pathway lipid metabolism; fatty acid biosynthesis. Functionally, catalyzes the condensation reaction of fatty acid synthesis by the addition to an acyl acceptor of two carbons from malonyl-ACP. Catalyzes the first condensation reaction which initiates fatty acid synthesis and may therefore play a role in governing the total rate of fatty acid production. Possesses both acetoacetyl-ACP synthase and acetyl transacylase activities. Its substrate specificity determines the biosynthesis of branched-chain and/or straight-chain of fatty acids. This chain is Beta-ketoacyl-[acyl-carrier-protein] synthase III, found in Rhodospirillum centenum (strain ATCC 51521 / SW).